We begin with the raw amino-acid sequence, 157 residues long: DNA gyrase inhibitor (157 aa).

The protein belongs to the DNA gyrase inhibitor family. Interacts with DNA gyrase.

The protein resides in the cytoplasm. In terms of biological role, inhibits the supercoiling activity of DNA gyrase. Acts by inhibiting DNA gyrase at an early step, prior to (or at the step of) binding of DNA by the gyrase. It protects cells against toxins that target DNA gyrase, by inhibiting activity of these toxins and reducing the formation of lethal double-strand breaks in the cell. The chain is DNA gyrase inhibitor from Enterobacter lignolyticus (strain SCF1).